The sequence spans 869 residues: Bifunctional uridylyltransferase/uridylyl-removing enzyme (869 aa).

The tract at residues 1–332 (MTDAPAERPD…QFDGEATPES (332 aa)) is uridylyltransferase. Residues 333 to 691 (LGGGFSLRRG…RRAVPDNDAL (359 aa)) form a uridylyl-removing region. Residues 450-572 (VDQHTLMVLR…VGTRERLDYL (123 aa)) enclose the HD domain. ACT domains lie at 692-774 (EVFV…RAVP) and 798-869 (RISL…LDPV).

This sequence belongs to the GlnD family. Mg(2+) serves as cofactor.

The enzyme catalyses [protein-PII]-L-tyrosine + UTP = [protein-PII]-uridylyl-L-tyrosine + diphosphate. It carries out the reaction [protein-PII]-uridylyl-L-tyrosine + H2O = [protein-PII]-L-tyrosine + UMP + H(+). Uridylyltransferase (UTase) activity is inhibited by glutamine, while glutamine activates uridylyl-removing (UR) activity. Functionally, modifies, by uridylylation and deuridylylation, the PII regulatory proteins (GlnB and homologs), in response to the nitrogen status of the cell that GlnD senses through the glutamine level. Under low glutamine levels, catalyzes the conversion of the PII proteins and UTP to PII-UMP and PPi, while under higher glutamine levels, GlnD hydrolyzes PII-UMP to PII and UMP (deuridylylation). Thus, controls uridylylation state and activity of the PII proteins, and plays an important role in the regulation of nitrogen assimilation and metabolism. This chain is Bifunctional uridylyltransferase/uridylyl-removing enzyme, found in Xanthomonas oryzae pv. oryzae (strain MAFF 311018).